A 308-amino-acid polypeptide reads, in one-letter code: Aspartate carbamoyltransferase catalytic subunit (308 aa).

Residues R49 and T50 each contribute to the carbamoyl phosphate site. K77 contacts L-aspartate. Carbamoyl phosphate contacts are provided by R99, H127, and Q130. L-aspartate contacts are provided by R160 and R211. Residues A252 and P253 each contribute to the carbamoyl phosphate site.

The protein belongs to the aspartate/ornithine carbamoyltransferase superfamily. ATCase family. In terms of assembly, heterododecamer (2C3:3R2) of six catalytic PyrB chains organized as two trimers (C3), and six regulatory PyrI chains organized as three dimers (R2).

The catalysed reaction is carbamoyl phosphate + L-aspartate = N-carbamoyl-L-aspartate + phosphate + H(+). The protein operates within pyrimidine metabolism; UMP biosynthesis via de novo pathway; (S)-dihydroorotate from bicarbonate: step 2/3. Its function is as follows. Catalyzes the condensation of carbamoyl phosphate and aspartate to form carbamoyl aspartate and inorganic phosphate, the committed step in the de novo pyrimidine nucleotide biosynthesis pathway. This is Aspartate carbamoyltransferase catalytic subunit from Geobacillus kaustophilus (strain HTA426).